The primary structure comprises 322 residues: Beta-ketoacyl-[acyl-carrier-protein] synthase III (322 aa).

Residues Cys113 and His249 contribute to the active site. The ACP-binding stretch occupies residues 250–254 (QANVR). Asn279 is an active-site residue.

This sequence belongs to the thiolase-like superfamily. FabH family. As to quaternary structure, homodimer.

It localises to the cytoplasm. It catalyses the reaction malonyl-[ACP] + acetyl-CoA + H(+) = 3-oxobutanoyl-[ACP] + CO2 + CoA. The protein operates within lipid metabolism; fatty acid biosynthesis. Its function is as follows. Catalyzes the condensation reaction of fatty acid synthesis by the addition to an acyl acceptor of two carbons from malonyl-ACP. Catalyzes the first condensation reaction which initiates fatty acid synthesis and may therefore play a role in governing the total rate of fatty acid production. Possesses both acetoacetyl-ACP synthase and acetyl transacylase activities. Its substrate specificity determines the biosynthesis of branched-chain and/or straight-chain of fatty acids. This chain is Beta-ketoacyl-[acyl-carrier-protein] synthase III, found in Anaplasma marginale (strain St. Maries).